The sequence spans 313 residues: Porphobilinogen deaminase (313 aa).

Cys-242 carries the post-translational modification S-(dipyrrolylmethanemethyl)cysteine.

It belongs to the HMBS family. Monomer. The cofactor is dipyrromethane.

The enzyme catalyses 4 porphobilinogen + H2O = hydroxymethylbilane + 4 NH4(+). The protein operates within porphyrin-containing compound metabolism; protoporphyrin-IX biosynthesis; coproporphyrinogen-III from 5-aminolevulinate: step 2/4. Functionally, tetrapolymerization of the monopyrrole PBG into the hydroxymethylbilane pre-uroporphyrinogen in several discrete steps. This is Porphobilinogen deaminase from Escherichia coli O6:H1 (strain CFT073 / ATCC 700928 / UPEC).